Reading from the N-terminus, the 288-residue chain is tRNA (guanine-N(1)-)-methyltransferase (288 aa).

The tract at residues 82–105 (ATDAVDTSDPGDSAAPDSSAPSGA) is disordered. Residues 89-105 (SDPGDSAAPDSSAPSGA) are compositionally biased toward low complexity. Residues Gly-137 and 162–167 (IGDYVL) each bind S-adenosyl-L-methionine.

The protein belongs to the RNA methyltransferase TrmD family. Homodimer.

Its subcellular location is the cytoplasm. It catalyses the reaction guanosine(37) in tRNA + S-adenosyl-L-methionine = N(1)-methylguanosine(37) in tRNA + S-adenosyl-L-homocysteine + H(+). In terms of biological role, specifically methylates guanosine-37 in various tRNAs. In Bifidobacterium longum (strain DJO10A), this protein is tRNA (guanine-N(1)-)-methyltransferase.